Here is a 165-residue protein sequence, read N- to C-terminus: ATP synthase subunit b (165 aa).

A helical membrane pass occupies residues 5 to 27 (INSTTLGNIIITLGSVFLLYYLI).

It belongs to the ATPase B chain family. F-type ATPases have 2 components, F(1) - the catalytic core - and F(0) - the membrane proton channel. F(1) has five subunits: alpha(3), beta(3), gamma(1), delta(1), epsilon(1). F(0) has three main subunits: a(1), b(2) and c(10-14). The alpha and beta chains form an alternating ring which encloses part of the gamma chain. F(1) is attached to F(0) by a central stalk formed by the gamma and epsilon chains, while a peripheral stalk is formed by the delta and b chains.

It localises to the cell membrane. F(1)F(0) ATP synthase produces ATP from ADP in the presence of a proton or sodium gradient. F-type ATPases consist of two structural domains, F(1) containing the extramembraneous catalytic core and F(0) containing the membrane proton channel, linked together by a central stalk and a peripheral stalk. During catalysis, ATP synthesis in the catalytic domain of F(1) is coupled via a rotary mechanism of the central stalk subunits to proton translocation. Functionally, component of the F(0) channel, it forms part of the peripheral stalk, linking F(1) to F(0). This Streptococcus thermophilus (strain CNRZ 1066) protein is ATP synthase subunit b.